The chain runs to 979 residues: Translation initiation factor IF-2 (979 aa).

A compositionally biased stretch (basic and acidic residues) spans 50-77; sequence LKRSHGQSDDSARKKITLTKRETSEIRQ. The interval 50–385 is disordered; that stretch reads LKRSHGQSDD…GKHNADDARS (336 aa). The span at 78–87 shows a compositional bias: polar residues; it reads SDSTGKTRTV. 3 stretches are compositionally biased toward basic and acidic residues: residues 98-109, 121-142, and 149-173; these read IKRDDVESHGDG, EEVR…RQEA, and EAAE…RRQA. Low complexity predominate over residues 174 to 192; it reads ELLAQKAAEEAAAAQAAAD. 3 stretches are compositionally biased toward basic and acidic residues: residues 196–211, 219–263, and 280–291; these read ETAR…RLAT, NADD…EAEA, and PSERKAEEKKAE. The segment covering 317-327 has biased composition (low complexity); the sequence is APAATTTTAAA. Residues 351–368 are compositionally biased toward gly residues; it reads GGGLKTRGDSSGGVGGWR. Residues 479–646 form the tr-type G domain; it reads PRPPVVTVMG…NVLLQAEVLE (168 aa). The G1 stretch occupies residues 488–495; it reads GHVDHGKT. 488–495 serves as a coordination point for GTP; sequence GHVDHGKT. Residues 513–517 are G2; it reads GITQH. The segment at 534–537 is G3; the sequence is DTPG. GTP-binding positions include 534 to 538 and 588 to 591; these read DTPGH and TKVD. Residues 588 to 591 are G4; that stretch reads TKVD. The tract at residues 624–626 is G5; it reads SAK.

The protein belongs to the TRAFAC class translation factor GTPase superfamily. Classic translation factor GTPase family. IF-2 subfamily.

Its subcellular location is the cytoplasm. In terms of biological role, one of the essential components for the initiation of protein synthesis. Protects formylmethionyl-tRNA from spontaneous hydrolysis and promotes its binding to the 30S ribosomal subunits. Also involved in the hydrolysis of GTP during the formation of the 70S ribosomal complex. This chain is Translation initiation factor IF-2, found in Cupriavidus metallidurans (strain ATCC 43123 / DSM 2839 / NBRC 102507 / CH34) (Ralstonia metallidurans).